The sequence spans 283 residues: Pantothenate synthetase (283 aa).

30-37 (MGNLHLGH) is a binding site for ATP. The Proton donor role is filled by His-37. Gln-61 lines the (R)-pantoate pocket. Beta-alanine is bound at residue Gln-61. An ATP-binding site is contributed by 149–152 (GQKD). Position 155 (Gln-155) interacts with (R)-pantoate. Residues Ile-178 and 186 to 189 (MSSR) contribute to the ATP site.

It belongs to the pantothenate synthetase family. In terms of assembly, homodimer.

The protein localises to the cytoplasm. It catalyses the reaction (R)-pantoate + beta-alanine + ATP = (R)-pantothenate + AMP + diphosphate + H(+). It functions in the pathway cofactor biosynthesis; (R)-pantothenate biosynthesis; (R)-pantothenate from (R)-pantoate and beta-alanine: step 1/1. Functionally, catalyzes the condensation of pantoate with beta-alanine in an ATP-dependent reaction via a pantoyl-adenylate intermediate. The sequence is that of Pantothenate synthetase from Shewanella halifaxensis (strain HAW-EB4).